A 117-amino-acid chain; its full sequence is PBP1-interacting protein XAC1 (117 aa).

The tract at residues 1-60 is disordered; that stretch reads MSKAPSQPAKKWMSARTLAKSEDATNRKSNTAAPASQPSQQPASVMHERPTPPPPAPVQL. Positions 32-44 are enriched in low complexity; the sequence is AAPASQPSQQPAS.

Forms a complex composed of at least MKT1, PBP1, XAC1 and LSM12. Forms a complex composed of at least MKT1L, PBP1, XAC1 and LSM12.

Its subcellular location is the cytoplasm. Functionally, involved in post-transcriptional regulation of gene expression. In Trypanosoma brucei brucei (strain 927/4 GUTat10.1), this protein is PBP1-interacting protein XAC1.